The primary structure comprises 555 residues: 2-succinyl-5-enolpyruvyl-6-hydroxy-3-cyclohexene-1-carboxylate synthase (555 aa).

It belongs to the TPP enzyme family. MenD subfamily. Homodimer. It depends on Mg(2+) as a cofactor. Mn(2+) is required as a cofactor. Requires thiamine diphosphate as cofactor.

It carries out the reaction isochorismate + 2-oxoglutarate + H(+) = 5-enolpyruvoyl-6-hydroxy-2-succinyl-cyclohex-3-ene-1-carboxylate + CO2. It functions in the pathway quinol/quinone metabolism; 1,4-dihydroxy-2-naphthoate biosynthesis; 1,4-dihydroxy-2-naphthoate from chorismate: step 2/7. Its pathway is quinol/quinone metabolism; menaquinone biosynthesis. Functionally, catalyzes the thiamine diphosphate-dependent decarboxylation of 2-oxoglutarate and the subsequent addition of the resulting succinic semialdehyde-thiamine pyrophosphate anion to isochorismate to yield 2-succinyl-5-enolpyruvyl-6-hydroxy-3-cyclohexene-1-carboxylate (SEPHCHC). This Bacteroides fragilis (strain ATCC 25285 / DSM 2151 / CCUG 4856 / JCM 11019 / LMG 10263 / NCTC 9343 / Onslow / VPI 2553 / EN-2) protein is 2-succinyl-5-enolpyruvyl-6-hydroxy-3-cyclohexene-1-carboxylate synthase.